The sequence spans 38 residues: Kappa-theraphotoxin-Hm2a (38 aa).

Cystine bridges form between cysteine 2–cysteine 16, cysteine 9–cysteine 21, and cysteine 15–cysteine 32. A Phenylalanine amide modification is found at phenylalanine 38.

The protein belongs to the neurotoxin 10 (Hwtx-1) family. 13 (Hntx-13) subfamily. Expressed by the venom gland.

It is found in the secreted. Its function is as follows. Inhibitor of voltage-gated potassium channels. It specifically inhibits Kv2.1/KCNB1 channels. This is Kappa-theraphotoxin-Hm2a from Heteroscodra maculata (Togo starburst tarantula).